The primary structure comprises 1171 residues: 7,8-linoleate diol synthase (1171 aa).

The segment covering 1 to 22 (MASSSSSGSSTRSSSPSDPPSS) has biased composition (low complexity). The segment at 1–56 (MASSSSSGSSTRSSSPSDPPSSFFQKLGAFLGLFSKPQPPRPDYPHAPGNSAREEQ) is disordered. Residues 114 to 457 (TDGLITGLWE…DGSFEDEGLI (344 aa)) are fatty acid alpha-dioxygenase. Position 213 (histidine 213) interacts with heme b. Residues aspartate 214, serine 229, tyrosine 231, aspartate 233, and serine 235 each coordinate Ca(2+). Tyrosine 385 is an active-site residue. Histidine 388 contacts heme b. Residues 675–1171 (KILNNQKDFK…PMNMKIRWDD (497 aa)) form an epoxy alcohol synthase region. The disordered stretch occupies residues 873-900 (GLANGGANGHANGNANGHTNGNGIHQNG). The span at 881 to 895 (GHANGNANGHTNGNG) shows a compositional bias: low complexity. A heme-binding site is contributed by cysteine 1089.

The protein in the N-terminal section; belongs to the peroxidase family. It in the C-terminal section; belongs to the cytochrome P450 family. In terms of assembly, homotetramer. Heme b is required as a cofactor. Requires Ca(2+) as cofactor. The cofactor is heme.

The enzyme catalyses (9Z,12Z)-octadecadienoate + O2 = (8R,9Z,12Z)-8-hydroperoxyoctadeca-9,12-dienoate. It catalyses the reaction (8R,9Z,12Z)-8-hydroperoxyoctadeca-9,12-dienoate = (7S,8S,9Z,12Z)-7,8-dihydroxyoctadeca-9,12-dienoate. 7,8-linoleate diol synthase is a bifunctional enzyme that converts linoleic acid (18:2n-6) into 8-hydroperoxy-8(E),12(Z)-octadecadienoic acid (8-HPODE) and then catalyzes the isomerization of the resulting hydroperoxide to 7,8-dihydroxy-9(Z),12(Z)-octadecadienoic acid (7,8-DiHODE). This is 7,8-linoleate diol synthase from Pyricularia oryzae (strain 70-15 / ATCC MYA-4617 / FGSC 8958) (Rice blast fungus).